Here is a 65-residue protein sequence, read N- to C-terminus: uncharacterized protein (65 aa).

A helical membrane pass occupies residues isoleucine 37 to isoleucine 57.

Its subcellular location is the cell membrane. This is an uncharacterized protein from Bacillus subtilis (strain 168).